The primary structure comprises 964 residues: Translation initiation factor IF-2 (964 aa).

Residues 26–375 (AAGVSKRSPE…QNNQHAFQAP (350 aa)) form a disordered region. 7 stretches are compositionally biased toward basic and acidic residues: residues 49–60 (YLKRSHGAREDS), 91–103 (VRPDDAPRAEAPK), 118–154 (AKPEPKPEPKVEAKPEPKPEPKPEPKVEAKPEPKPEP), 174–206 (IAAREAEEKRQAAFRARQEALMREKIEREERRQ), 225–236 (PQREERRDDRRG), 243–252 (RGPRGNDNRG), and 328–339 (KGGERSWDDNKK). Residues 464–633 (PRSPVVTVMG…LLQAEVLELK (170 aa)) form the tr-type G domain. Residues 473-480 (GHVDHGKT) are G1. 473 to 480 (GHVDHGKT) is a binding site for GTP. A G2 region spans residues 498–502 (GITQH). The G3 stretch occupies residues 519–522 (DTPG). GTP-binding positions include 519–523 (DTPGH) and 573–576 (NKID). Residues 573 to 576 (NKID) form a G4 region. Residues 609–611 (SAK) are G5.

The protein belongs to the TRAFAC class translation factor GTPase superfamily. Classic translation factor GTPase family. IF-2 subfamily.

Its subcellular location is the cytoplasm. Its function is as follows. One of the essential components for the initiation of protein synthesis. Protects formylmethionyl-tRNA from spontaneous hydrolysis and promotes its binding to the 30S ribosomal subunits. Also involved in the hydrolysis of GTP during the formation of the 70S ribosomal complex. The polypeptide is Translation initiation factor IF-2 (Chromobacterium violaceum (strain ATCC 12472 / DSM 30191 / JCM 1249 / CCUG 213 / NBRC 12614 / NCIMB 9131 / NCTC 9757 / MK)).